The primary structure comprises 273 residues: Shikimate dehydrogenase (NADP(+)) (273 aa).

Residues 14-16 (SLS) and threonine 59 each bind shikimate. Residue lysine 63 is the Proton acceptor of the active site. Shikimate is bound by residues asparagine 84 and aspartate 99. Residues 122–126 (GAGGA) and methionine 212 each bind NADP(+). Residue tyrosine 214 participates in shikimate binding. Position 235 (glycine 235) interacts with NADP(+).

This sequence belongs to the shikimate dehydrogenase family. Homodimer.

It catalyses the reaction shikimate + NADP(+) = 3-dehydroshikimate + NADPH + H(+). It participates in metabolic intermediate biosynthesis; chorismate biosynthesis; chorismate from D-erythrose 4-phosphate and phosphoenolpyruvate: step 4/7. In terms of biological role, involved in the biosynthesis of the chorismate, which leads to the biosynthesis of aromatic amino acids. Catalyzes the reversible NADPH linked reduction of 3-dehydroshikimate (DHSA) to yield shikimate (SA). In Aeropyrum pernix (strain ATCC 700893 / DSM 11879 / JCM 9820 / NBRC 100138 / K1), this protein is Shikimate dehydrogenase (NADP(+)).